Reading from the N-terminus, the 489-residue chain is UDP-glycosyltransferase 85A1 (489 aa).

UDP-alpha-D-glucose-binding positions include S307, C364–Q366, H381–E389, and F403–Q406.

The protein belongs to the UDP-glycosyltransferase family. Expressed in root tips, lateral root initials, root apex, shoots, leaf periphery, leaf primordia and flowers.

Functionally, involved in the O-glucosylation of trans-zeatin and dihydrozeatin. Also active in vitro on cis-zeatin. Not active on N-glucosylated substrates. In Arabidopsis thaliana (Mouse-ear cress), this protein is UDP-glycosyltransferase 85A1 (UGT85A1).